We begin with the raw amino-acid sequence, 606 residues long: Mitogen-activated protein kinase kinase kinase 7 (606 aa).

An interaction with MAPK8IP1 region spans residues 1–300; sequence MSTASAASSS…FPGADEPLQY (300 aa). The Protein kinase domain maps to 36–291; the sequence is IEVEEVVGRG…KIMTHLMRYF (256 aa). ATP contacts are provided by residues 42 to 50 and lysine 63; that span reads VGRGAFGVV. Lysine 72 participates in a covalent cross-link: Glycyl lysine isopeptide (Lys-Gly) (interchain with G-Cter in ubiquitin). The active-site Proton acceptor is the aspartate 156. Residue lysine 158 forms a Glycyl lysine isopeptide (Lys-Gly) (interchain with G-Cter in ubiquitin) linkage. 2 positions are modified to phosphothreonine; by autocatalysis: threonine 184 and threonine 187. At serine 192 the chain carries Phosphoserine; by autocatalysis. A Glycyl lysine isopeptide (Lys-Gly) (interchain with G-Cter in ubiquitin) cross-link involves residue lysine 209. Disordered regions lie at residues 301–338 and 354–391; these read PCQYSDEGQSNSATSTGSFMDIASTNTSNKSDTNMEQV and KNQAKQQSDSGRLSLGASRGSSVESLPPTSEGKRMSAD. Polar residues predominate over residues 306–338; the sequence is DEGQSNSATSTGSFMDIASTNTSNKSDTNMEQV. Residues 361–375 are compositionally biased toward low complexity; it reads SDSGRLSLGASRGSS. 3 positions are modified to phosphoserine: serine 367, serine 389, and serine 439. Polar residues predominate over residues 443–452; it reads LTVTGTEPGQ. Residues 443–492 are disordered; sequence LTVTGTEPGQVSSRSSSPSVRMITTSGPTSEKPARSLPWTPDDSTDTNGS. Low complexity predominate over residues 453–463; sequence VSSRSSSPSVR. Serine 455 carries the post-translational modification Phosphoserine.

This sequence belongs to the protein kinase superfamily. STE Ser/Thr protein kinase family. MAP kinase kinase kinase subfamily. In terms of assembly, can form homodimer. Binds both upstream activators and downstream substrates in multimolecular complexes. Interacts with TAB1/MAP3K7IP1, TAB2/MAP3K7IP2 and TAB3/MAP3K7IP3. Identified in the TRIKA2 complex composed of MAP3K7/TAK1, TAB1/MAP3K7IP1 and TAB2/MAP3K7IP2. Interacts with PPM1L and PPM1B/PP2CB. Interaction with PP2A and PPP6C leads to its repressed activity. Interacts with TRAF6 and TAB1/MAP3K7IP1; during IL-1 signaling. Interacts with TAOK1 and TAOK2; interaction with TAOK2 interferes with MAP3K7 interaction with IKKA, thus preventing NF-kappa-B activation. Interacts with DYNC2I2 (via WD domains). Interacts with CYLD and RBCK1. Interacts with TGFBR1; induces MAP3K7/TAK1 activation by TRAF6. Interacts with MAPK8IP1 and SMAD6. Interacts with isoform 1 of VRK2. Interacts with DAB2; the interaction is induced by TGF-beta stimulation and may mediate TGF-beta stimulated JNK activation. Interacts with TRIM5. Part of a complex containing ITCH, NDFIP1 and MAP3K7. Interacts with PLEKHM1 (via N- and C-terminus). Found in a complex with SH3RF1, RAC2, MAP2K7/MKK7, MAPK8IP1/JIP1, MAPK8/JNK1 and MAPK9/JNK2. Interacts with SASH1. Interacts with RIPK1. Requires Mg(2+) as cofactor. Association with TAB1/MAP3K7IP1 promotes autophosphorylation at Ser-192 and subsequent activation. Association with TAB2/MAP3K7IP2, itself associated with free unanchored Lys-63 polyubiquitin chain, promotes autophosphorylation and subsequent activation of MAP3K7. Dephosphorylation at Ser-192 by PPM1B/PP2CB and at Thr-187 by PP2A and PPP6C leads to inactivation. Deubiquitinated by USP19; leading to negative regulation of TNF-alpha- and IL-1beta-triggered NF-kappa-B activation. In terms of processing, 'Lys-48'-linked polyubiquitination at Lys-72 is induced by TNFalpha, and leads to proteasomal degradation. Undergoes 'Lys-48'-linked polyubiquitination catalyzed by ITCH. 'Lys-63'-linked polyubiquitination at Lys-158 by TRIM8 does not lead to proteasomal degradation but contributes to autophosphorylation and activation. Deubiquitinated by CYLD, a protease that selectively cleaves 'Lys-63'-linked ubiquitin chains.

Its subcellular location is the cytoplasm. It is found in the cell membrane. It carries out the reaction L-seryl-[protein] + ATP = O-phospho-L-seryl-[protein] + ADP + H(+). The catalysed reaction is L-threonyl-[protein] + ATP = O-phospho-L-threonyl-[protein] + ADP + H(+). With respect to regulation, activated by pro-inflammatory cytokines and in response to physical and chemical stresses, including osmotic stress, oxidative stress, arsenic and ultraviolet light irradiation. Activated by 'Lys-63'-linked polyubiquitination and by autophosphorylation. Association with TAB1/MAP3K7IP1 and TAB2/MAP3K7IP2 promotes activation through autophosphorylation, whereas PPM1B/PP2CB, PP2A and PPP6C dephosphorylation leads to inactivation. Ceramides are also able to activate MAP3K7/TAK1. Functionally, serine/threonine kinase which acts as an essential component of the MAP kinase signal transduction pathway. Plays an important role in the cascades of cellular responses evoked by changes in the environment. Mediates signal transduction of TRAF6, various cytokines including interleukin-1 (IL-1), transforming growth factor-beta (TGFB), TGFB-related factors like BMP2 and BMP4, toll-like receptors (TLR), tumor necrosis factor receptor CD40 and B-cell receptor (BCR). Once activated, acts as an upstream activator of the MKK/JNK signal transduction cascade and the p38 MAPK signal transduction cascade through the phosphorylation and activation of several MAP kinase kinases like MAP2K1/MEK1, MAP2K3/MKK3, MAP2K6/MKK6 and MAP2K7/MKK7. These MAP2Ks in turn activate p38 MAPKs and c-jun N-terminal kinases (JNKs); both p38 MAPK and JNK pathways control the transcription factors activator protein-1 (AP-1). Independently of MAP2Ks and p38 MAPKs, acts as a key activator of NF-kappa-B by promoting activation of the I-kappa-B-kinase (IKK) core complex. Mechanistically, recruited to polyubiquitin chains of RIPK2 and IKBKG/NEMO via TAB2/MAP3K7IP2 and TAB3/MAP3K7IP3, and catalyzes phosphorylation and activation of IKBKB/IKKB component of the IKK complex, leading to NF-kappa-B activation. In osmotic stress signaling, plays a major role in the activation of MAPK8/JNK1, but not that of NF-kappa-B. Promotes TRIM5 capsid-specific restriction activity. Phosphorylates RIPK1 at 'Ser-321' which positively regulates RIPK1 interaction with RIPK3 to promote necroptosis but negatively regulates RIPK1 kinase activity and its interaction with FADD to mediate apoptosis. Phosphorylates STING1 in response to cGAMP-activation, promoting association between STEEP1 and STING1 and STING1 translocation to COPII vesicles. This Rattus norvegicus (Rat) protein is Mitogen-activated protein kinase kinase kinase 7 (Map3k7).